Reading from the N-terminus, the 278-residue chain is 4-deoxy-L-threo-5-hexosulose-uronate ketol-isomerase (278 aa).

Zn(2+) is bound by residues H196, H198, E203, and H245.

This sequence belongs to the KduI family. The cofactor is Zn(2+).

It catalyses the reaction 5-dehydro-4-deoxy-D-glucuronate = 3-deoxy-D-glycero-2,5-hexodiulosonate. The protein operates within glycan metabolism; pectin degradation; 2-dehydro-3-deoxy-D-gluconate from pectin: step 4/5. Functionally, catalyzes the isomerization of 5-dehydro-4-deoxy-D-glucuronate to 3-deoxy-D-glycero-2,5-hexodiulosonate. In Salmonella heidelberg (strain SL476), this protein is 4-deoxy-L-threo-5-hexosulose-uronate ketol-isomerase.